A 339-amino-acid chain; its full sequence is Phenylalanine--tRNA ligase alpha subunit (339 aa).

Residue Glu254 participates in Mg(2+) binding.

Belongs to the class-II aminoacyl-tRNA synthetase family. Phe-tRNA synthetase alpha subunit type 1 subfamily. Tetramer of two alpha and two beta subunits. Mg(2+) is required as a cofactor.

The protein resides in the cytoplasm. The catalysed reaction is tRNA(Phe) + L-phenylalanine + ATP = L-phenylalanyl-tRNA(Phe) + AMP + diphosphate + H(+). The chain is Phenylalanine--tRNA ligase alpha subunit from Clostridium tetani (strain Massachusetts / E88).